The sequence spans 286 residues: MVKIGVHVSIAGSIARAVERAMAIDCDTFQIFSRNPRGWTFKPLAEEDAALFQGALGTSGIGPAVVHMPYLPNLASPKEEIWRKSVEALTEELHRCSMLDVPYLVTHLGHHMGEGIGAGEGRVQQAIDAAFSQSDPGSSRVMLLLENTAGEKNSVGSRFEEIGRIRESCSDPDRIGVCMDTCHAFAAGYDLRNEVGLSRTLEAFEDGIGIEHLHVIHLNDAKADIGSHLDRHTHIGLGMIGEEGCSGILTHPTLASLPFICETPEDAVRDNAANIRAVRRLAVPRA.

The Zn(2+) site is built by His67, His107, Glu146, Asp180, His183, His217, Asp230, His232, and Glu262.

It belongs to the AP endonuclease 2 family. Zn(2+) is required as a cofactor.

The enzyme catalyses Endonucleolytic cleavage to 5'-phosphooligonucleotide end-products.. Endonuclease IV plays a role in DNA repair. It cleaves phosphodiester bonds at apurinic or apyrimidinic (AP) sites, generating a 3'-hydroxyl group and a 5'-terminal sugar phosphate. The protein is Probable endonuclease 4 of Methanosphaerula palustris (strain ATCC BAA-1556 / DSM 19958 / E1-9c).